The following is a 463-amino-acid chain: Vacuolar cation/proton exchanger 1 (463 aa).

Ala2 carries the N-acetylalanine modification. Residues 2-68 (AGIVTEPWSV…LKDFLSNLQE (67 aa)) are Cytoplasmic-facing. The tract at residues 25-33 (SRELRLGRT) is required for autoinhibitory regulation. A required for interaction with autoinhibitory region region spans residues 56-62 (YKGLKDF). The chain crosses the membrane as a helical span at residues 69–89 (VILGTKLAILFPAIPAAIICT). The interval 87–95 (ICTYCGVSQ) is required for Ca(2+)/H(+) exchange activity. Topologically, residues 90 to 96 (YCGVSQP) are extracellular. A helical transmembrane segment spans residues 97-116 (WIFGLSLLGLTPLAERVSFL). At 117–127 (TEQLAFYTGPT) the chain is on the cytoplasmic side. A helical membrane pass occupies residues 128–148 (LGGLLNATCGNATELIIAILA). A cation selection region spans residues 137–172 (GNATELIIAILALTNNKVAVVKYSLLGSILSNLLLV). The Extracellular segment spans residues 149 to 161 (LTNNKVAVVKYSL). The chain crosses the membrane as a helical span at residues 162–182 (LGSILSNLLLVLGTSLFCGGI). The Cytoplasmic segment spans residues 183–197 (ANIRREQRFDRKQAD). The chain crosses the membrane as a helical span at residues 198–218 (VNFFLLLLGFLCHLLPLLVGY). The Extracellular segment spans residues 219-238 (LKNGEASAAVLSDMQLSISR). Residues 239 to 259 (GFSIVMLISYIAYLVFQLWTH) form a helical membrane-spanning segment. At 260–281 (RQLFDAQEQEDEYDDDVEQETA) the chain is on the cytoplasmic side. Residues 282–302 (VISFWSGFAWLVGMTLVIALL) form a helical membrane-spanning segment. Topologically, residues 303-325 (SEYVVATIEEASDKWNLSVSFIS) are extracellular. A glycan (N-linked (GlcNAc...) asparagine) is linked at Asn318. A helical membrane pass occupies residues 326–346 (IILLPIVGNAAEHAGAVIFAF). A cation selection region spans residues 333–368 (GNAAEHAGAVIFAFKNKLDISLGVALGSATQIGLFV). At 347–360 (KNKLDISLGVALGS) the chain is on the cytoplasmic side. The chain crosses the membrane as a helical span at residues 361–381 (ATQIGLFVVPLTIIVAWILGI). The Extracellular segment spans residues 382 to 384 (NMD). A helical transmembrane segment spans residues 385–405 (LNFGPLETGCLAVSIIITAFT). The Cytoplasmic portion of the chain corresponds to 406 to 411 (LQDGSS). A helical transmembrane segment spans residues 412–432 (HYMKGLVLLLCYFIIAICFFV). The Extracellular segment spans residues 433–463 (DKLPQKQNAIHLGHQAMNNVVTATGGGVFSS).

This sequence belongs to the Ca(2+):cation antiporter (CaCA) (TC 2.A.19) family. Cation/proton exchanger (CAX) subfamily. As to quaternary structure, interacts with GRXS14 and CXIP4. In terms of tissue distribution, expressed at low levels in leaves, stems and flowers.

Its subcellular location is the vacuole membrane. Activated by monothiol glutaredoxin GRXS14 and CXIP4. Inhibited by excess of Ca(2+) and Cd(2+), Na(+) and K(+), but not Mn(2+). Functionally, vacuolar cation/proton exchanger (CAX). Translocates Ca(2+) and other metal ions into vacuoles using the proton gradient formed by H(+)-ATPase and H(+)-pyrophosphatase. Involved in ion homeostasis in association with CAX3. May play a role in cold-acclimation response. This chain is Vacuolar cation/proton exchanger 1 (CAX1), found in Arabidopsis thaliana (Mouse-ear cress).